The sequence spans 506 residues: Kynurenine 3-monooxygenase (506 aa).

The interval 153–174 (QETSLLPGEESEKDKKQNTEDE) is disordered. Residues 162–171 (ESEKDKKQNT) are compositionally biased toward basic and acidic residues.

This sequence belongs to the aromatic-ring hydroxylase family. KMO subfamily. Requires FAD as cofactor.

It is found in the mitochondrion outer membrane. The enzyme catalyses L-kynurenine + NADPH + O2 + H(+) = 3-hydroxy-L-kynurenine + NADP(+) + H2O. It functions in the pathway cofactor biosynthesis; NAD(+) biosynthesis; quinolinate from L-kynurenine: step 1/3. Functionally, catalyzes the hydroxylation of L-kynurenine (L-Kyn) to form 3-hydroxy-L-kynurenine (L-3OHKyn). Required for synthesis of quinolinic acid. This Cryptococcus neoformans var. neoformans serotype D (strain JEC21 / ATCC MYA-565) (Filobasidiella neoformans) protein is Kynurenine 3-monooxygenase.